We begin with the raw amino-acid sequence, 256 residues long: Leucine-rich repeat-containing protein 18 (256 aa).

8 LRR repeats span residues 28-49 (GRKR…ILRL), 51-72 (EIDE…ISKF), 74-95 (NLRW…IGQM), 97-118 (SLLF…VELN), 122-144 (NIRT…GALK), 145-167 (ELHE…SKLP), 168-189 (KLKK…DMFV), and 194-215 (RLEN…QKCQ).

The protein localises to the cytoplasm. Its function is as follows. May be involved in the regulation of spermatogenesis and sperm maturation. The protein is Leucine-rich repeat-containing protein 18 (Lrrc18) of Rattus norvegicus (Rat).